Reading from the N-terminus, the 117-residue chain is MDWTWRFLFVVAAATGVQSQVQLVQSGAEVKKPGSSVKVSCKASGGTFSSYAISWVRQAPGQGLEWMGGIIPIFGTANYAQKFQGRVTITADESTSTAYMELSSLRSEDTAVYYCAR.

The signal sequence occupies residues 1–19 (MDWTWRFLFVVAAATGVQS). Position 20 is a pyrrolidone carboxylic acid (Gln-20). The tract at residues 20 to 44 (QVQLVQSGAEVKKPGSSVKVSCKAS) is framework-1. The Ig-like domain maps to 20–117 (QVQLVQSGAE…EDTAVYYCAR (98 aa)). Cys-41 and Cys-115 form a disulfide bridge. Residues 45–52 (GGTFSSYA) are complementarity-determining-1. The segment at 53-69 (ISWVRQAPGQGLEWMGG) is framework-2. The complementarity-determining-2 stretch occupies residues 70–77 (IIPIFGTA). The interval 78 to 115 (NYAQKFQGRVTITADESTSTAYMELSSLRSEDTAVYYC) is framework-3. Positions 116-117 (AR) are complementarity-determining-3.

In terms of assembly, immunoglobulins are composed of two identical heavy chains and two identical light chains; disulfide-linked.

It is found in the secreted. The protein resides in the cell membrane. V region of the variable domain of immunoglobulin heavy chains that participates in the antigen recognition. Immunoglobulins, also known as antibodies, are membrane-bound or secreted glycoproteins produced by B lymphocytes. In the recognition phase of humoral immunity, the membrane-bound immunoglobulins serve as receptors which, upon binding of a specific antigen, trigger the clonal expansion and differentiation of B lymphocytes into immunoglobulins-secreting plasma cells. Secreted immunoglobulins mediate the effector phase of humoral immunity, which results in the elimination of bound antigens. The antigen binding site is formed by the variable domain of one heavy chain, together with that of its associated light chain. Thus, each immunoglobulin has two antigen binding sites with remarkable affinity for a particular antigen. The variable domains are assembled by a process called V-(D)-J rearrangement and can then be subjected to somatic hypermutations which, after exposure to antigen and selection, allow affinity maturation for a particular antigen. The polypeptide is Immunoglobulin heavy variable 1-69D (Homo sapiens (Human)).